The chain runs to 217 residues: uncharacterized protein (217 aa).

This is an uncharacterized protein from Methanothermobacter thermautotrophicus (Methanobacterium thermoformicicum).